A 270-amino-acid chain; its full sequence is uncharacterized protein (270 aa).

The protein localises to the virion. This is an uncharacterized protein from Acanthamoeba polyphaga (Amoeba).